Here is a 715-residue protein sequence, read N- to C-terminus: uncharacterized protein (715 aa).

Residues 688-708 form a helical membrane-spanning segment; sequence VWKFNPALYSTITNIFLLIIF.

It belongs to the plectrovirus ORF1 family.

The protein localises to the host membrane. This is an uncharacterized protein from Spiroplasma virus SpV1-R8A2 B (SpV1).